We begin with the raw amino-acid sequence, 556 residues long: Guanosine-diphosphatase (556 aa).

Residues 1–12 (MTPTMKSIARRK) lie on the Cytoplasmic side of the membrane. A helical; Signal-anchor for type II membrane protein transmembrane segment spans residues 13 to 33 (ALLIALSIFAVTFILWNGFPG). Residues 34–556 (SSNRPLPSSN…GWNCNVKEEI (523 aa)) lie on the Lumenal side of the membrane. Glutamate 256 serves as the catalytic Proton acceptor. N-linked (GlcNAc...) asparagine glycosylation is present at asparagine 372.

It belongs to the GDA1/CD39 NTPase family. The cofactor is Ca(2+). Mn(2+) serves as cofactor.

Its subcellular location is the golgi apparatus membrane. The catalysed reaction is GDP + H2O = GMP + phosphate + H(+). It functions in the pathway protein modification; protein glycosylation. In terms of biological role, after transfer of sugars to endogenous macromolecular acceptors, the enzyme converts nucleoside diphosphates to nucleoside monophosphates which in turn exit the Golgi lumen in a coupled antiporter reaction, allowing entry of additional nucleotide sugar from the cytosol. This is Guanosine-diphosphatase (gdp1) from Schizosaccharomyces pombe (strain 972 / ATCC 24843) (Fission yeast).